Reading from the N-terminus, the 67-residue chain is Penaeidin-4a (67 aa).

Positions 1-19 (MRLVVCLVFLASFALVCQG) are cleaved as a signal peptide. 3 cysteine pairs are disulfide-bonded: cysteine 42–cysteine 56, cysteine 45–cysteine 63, and cysteine 57–cysteine 64. Arginine 66 carries the arginine amide modification.

The protein belongs to the penaeidin family.

It is found in the cytoplasmic granule. Antibacterial and antifungal activity. Presents chitin-binding activity. This is Penaeidin-4a from Penaeus vannamei (Whiteleg shrimp).